We begin with the raw amino-acid sequence, 60 residues long: Truncated protein A35 homolog (60 aa).

It belongs to the chordopoxvirinae A35 protein family.

The chain is Truncated protein A35 homolog (A38R) from Variola virus (isolate Human/India/Ind3/1967) (VARV).